We begin with the raw amino-acid sequence, 124 residues long: Glycine cleavage system H protein (124 aa).

In terms of domain architecture, Lipoyl-binding spans 19–101; it reads TGTVGITDYA…AGKGWFLQIK (83 aa). At Lys-60 the chain carries N6-lipoyllysine.

This sequence belongs to the GcvH family. The glycine cleavage system is composed of four proteins: P, T, L and H. The cofactor is (R)-lipoate.

Functionally, the glycine cleavage system catalyzes the degradation of glycine. The H protein shuttles the methylamine group of glycine from the P protein to the T protein. The chain is Glycine cleavage system H protein from Beijerinckia indica subsp. indica (strain ATCC 9039 / DSM 1715 / NCIMB 8712).